We begin with the raw amino-acid sequence, 428 residues long: Serine--tRNA ligase (428 aa).

Position 235–237 (235–237 (TAE)) interacts with L-serine. 266-268 (RSE) contacts ATP. Residue glutamate 289 participates in L-serine binding. Residue 353–356 (EISS) participates in ATP binding. Serine 389 is a binding site for L-serine.

The protein belongs to the class-II aminoacyl-tRNA synthetase family. Type-1 seryl-tRNA synthetase subfamily. In terms of assembly, homodimer. The tRNA molecule binds across the dimer.

Its subcellular location is the cytoplasm. It carries out the reaction tRNA(Ser) + L-serine + ATP = L-seryl-tRNA(Ser) + AMP + diphosphate + H(+). The enzyme catalyses tRNA(Sec) + L-serine + ATP = L-seryl-tRNA(Sec) + AMP + diphosphate + H(+). It participates in aminoacyl-tRNA biosynthesis; selenocysteinyl-tRNA(Sec) biosynthesis; L-seryl-tRNA(Sec) from L-serine and tRNA(Sec): step 1/1. Its function is as follows. Catalyzes the attachment of serine to tRNA(Ser). Is also able to aminoacylate tRNA(Sec) with serine, to form the misacylated tRNA L-seryl-tRNA(Sec), which will be further converted into selenocysteinyl-tRNA(Sec). In Shewanella oneidensis (strain ATCC 700550 / JCM 31522 / CIP 106686 / LMG 19005 / NCIMB 14063 / MR-1), this protein is Serine--tRNA ligase.